The following is a 770-amino-acid chain: MDGRNERPTTPVSDFRVGSSEQSQAGVNLEDSSDYRTSNSAESKKGNLSGKSISDLGISNNDNKNVRFTADTDALENDLSSRSTETSDNSKGTDGQGEEDRPARHKRKPKVSFTHLRNNGKDGDDETFIKKIINNLTGNQGGLVPGLAPIPSENENGKDDIEKNNRNEEIPLSDLADASKIVDVHEGDNKEKLEALKLESDVNCTSDGETLGSSSKNSFLAPAVDHFDDYAENNSSDDNEGFIETSTYVPPPSQVKSGVLGSLLKLYQNEDQNSSSIFSDSQAVTTDDEGISSTAGNKDVPVAKRSRLQNLKGKAKKGRMPRLKKRLKTEAKITVHIADILQRHRFILRMCRALMMYGAPTHRLEEYMVMTSRVLEIDGQFLYLPGCMIVSFGDATTRTSEVQLVRCTQGLNLWKLHQVHAVYKRVVHDTLGADEGNALLDQILADTNLYPPWMCVLLYAFCSAMVTPYAFGGDWVNLAISFFMGLCVGSLQFILSQKSYMYSNVFEISASIVVSFCGRAFGSIPRSHICFGAVTQGSLALILPGYIILCGALELQSRSLVAGAVRMFYAIIYSLFLGFGITLGSALFGWMYHNATNEISCPQLISPWFRFLFVPAFTISISLLNQAHISQLPVMVFISCTGYVVTYWAGKHFANSTEFTAALAAFVIGVLGNLYSRIWKGLAVSAMLPAIFVQVPSGIASQNSLLSGLQSANTIVNANETITTSTSDPSSSMSFGMTMIQVCVGISVGLFASSLFVYPFGKKKTGLFSL.

2 disordered regions span residues 1–125 (MDGR…DGDD) and 139–169 (NQGGLVPGLAPIPSENENGKDDIEKNNRNEE). 2 stretches are compositionally biased toward polar residues: residues 49-63 (SGKSISDLGISNNDN) and 78-93 (DLSSRSTETSDNSKGT). Basic and acidic residues predominate over residues 155–169 (ENGKDDIEKNNRNEE). 10 helical membrane-spanning segments follow: residues 453-473 (WMCVLLYAFCSAMVTPYAFGG), 475-495 (WVNLAISFFMGLCVGSLQFIL), 505-525 (VFEISASIVVSFCGRAFGSIP), 529-549 (ICFGAVTQGSLALILPGYIIL), 568-588 (FYAIIYSLFLGFGITLGSALF), 604-624 (LISPWFRFLFVPAFTISISLL), 629-649 (ISQLPVMVFISCTGYVVTYWA), 659-679 (FTAALAAFVIGVLGNLYSRIW), 681-701 (GLAVSAMLPAIFVQVPSGIAS), and 740-760 (IQVCVGISVGLFASSLFVYPF).

Belongs to the ThrE exporter (TC 2.A.79) family.

It is found in the membrane. The polypeptide is Pheromone-regulated membrane protein 10 (PRM10) (Saccharomyces cerevisiae (strain YJM789) (Baker's yeast)).